A 252-amino-acid polypeptide reads, in one-letter code: 2-succinyl-6-hydroxy-2,4-cyclohexadiene-1-carboxylate synthase (252 aa).

Belongs to the AB hydrolase superfamily. MenH family. Monomer.

It carries out the reaction 5-enolpyruvoyl-6-hydroxy-2-succinyl-cyclohex-3-ene-1-carboxylate = (1R,6R)-6-hydroxy-2-succinyl-cyclohexa-2,4-diene-1-carboxylate + pyruvate. It functions in the pathway quinol/quinone metabolism; 1,4-dihydroxy-2-naphthoate biosynthesis; 1,4-dihydroxy-2-naphthoate from chorismate: step 3/7. The protein operates within quinol/quinone metabolism; menaquinone biosynthesis. In terms of biological role, catalyzes a proton abstraction reaction that results in 2,5-elimination of pyruvate from 2-succinyl-5-enolpyruvyl-6-hydroxy-3-cyclohexene-1-carboxylate (SEPHCHC) and the formation of 2-succinyl-6-hydroxy-2,4-cyclohexadiene-1-carboxylate (SHCHC). This Salmonella paratyphi A (strain ATCC 9150 / SARB42) protein is 2-succinyl-6-hydroxy-2,4-cyclohexadiene-1-carboxylate synthase.